Reading from the N-terminus, the 124-residue chain is Large ribosomal subunit protein bL12 (124 aa).

This sequence belongs to the bacterial ribosomal protein bL12 family. In terms of assembly, homodimer. Part of the ribosomal stalk of the 50S ribosomal subunit. Forms a multimeric L10(L12)X complex, where L10 forms an elongated spine to which 2 to 4 L12 dimers bind in a sequential fashion. Binds GTP-bound translation factors.

In terms of biological role, forms part of the ribosomal stalk which helps the ribosome interact with GTP-bound translation factors. Is thus essential for accurate translation. The chain is Large ribosomal subunit protein bL12 from Desulfitobacterium hafniense (strain DSM 10664 / DCB-2).